The sequence spans 679 residues: ATP-dependent zinc metalloprotease FtsH (679 aa).

Residues 1–6 (MNRIFR) lie on the Cytoplasmic side of the membrane. The chain crosses the membrane as a helical span at residues 7 to 27 (NTIFYLLIFLVIVGIVSVFNS). At 28–114 (DQTETENVSF…IEPADETSGW (87 aa)) the chain is on the extracellular side. The helical transmembrane segment at 115–135 (VQFFTGIIPFIIIFILFFFLL) threads the bilayer. Topologically, residues 136–679 (SQAQGGGSRV…SFEDDTNKKE (544 aa)) are cytoplasmic. 206–213 (GPPGTGKT) provides a ligand contact to ATP. Residue His-428 participates in Zn(2+) binding. Residue Glu-429 is part of the active site. Residues His-432 and Asp-504 each coordinate Zn(2+). Basic and acidic residues-rich tracts occupy residues 621–642 (LEKEKASESDVKVNINSKKEET) and 658–679 (PIEKDPSVEDNRSFEDDTNKKE). The interval 621-679 (LEKEKASESDVKVNINSKKEETPQVEAEQPQEPNTDEPIEKDPSVEDNRSFEDDTNKKE) is disordered.

It in the central section; belongs to the AAA ATPase family. This sequence in the C-terminal section; belongs to the peptidase M41 family. Homohexamer. It depends on Zn(2+) as a cofactor.

Its subcellular location is the cell membrane. Acts as a processive, ATP-dependent zinc metallopeptidase for both cytoplasmic and membrane proteins. Plays a role in the quality control of integral membrane proteins. The chain is ATP-dependent zinc metalloprotease FtsH from Alkalihalophilus pseudofirmus (strain ATCC BAA-2126 / JCM 17055 / OF4) (Bacillus pseudofirmus).